A 205-amino-acid polypeptide reads, in one-letter code: Arginine exporter protein ArgO (205 aa).

A run of 6 helical transmembrane segments spans residues 1–21 (MLAVYLHGFILSAAMILPLGP), 42–62 (LCALSDIILICAGIFGGSALL), 67–87 (LLLALVTWGGVAFLMWYGWGA), 111–131 (ILVTLLAVTWLNPHVYLDTFV), 147–167 (WFALGAVTASIVWFFALAFLA), and 185–205 (LFVGGVMGFIAFQLARQGFGL).

Belongs to the LysE/ArgO transporter (TC 2.A.75) family.

Its subcellular location is the cell inner membrane. It carries out the reaction L-arginine(in) = L-arginine(out). Involved in the export of arginine. Important to control the intracellular level of arginine and the correct balance between arginine and lysine. This chain is Arginine exporter protein ArgO, found in Yersinia pseudotuberculosis serotype O:3 (strain YPIII).